We begin with the raw amino-acid sequence, 352 residues long: MMAHELPLSIHTKKSNHNVPPSKAPSAKTNKHKPSKSGSDDRGLPNGGKVDFGNKSGSQTNKKSNKKTSKHTSSNTSNNKGVTRVLPDGSKPNFGNESSHQNGGNHKKQNNEPCLPNGEKPNFGEGSKSHSKKKNNDHVLPNGEKPNFFNEKSSKKATKPKEKKPLITEDTYAGSSFHSSPAALNLPKPSFKTSPKTNDAKQHTTEPNYHVNPQVNTPPQHSVNVPPQHPVTTYPAGNGVPNIPTVPSNPTAFPPRNHYAQPGFSYYATPQGYINYQYPQVPPPPPPQGGVYPMVAPQYQQQPQQHPQQHPQPQPQPQQLPQQHRPHHLPAIAAPQQGHRISFNELLGSSKS.

2 disordered regions span residues 1 to 258 (MMAH…PRNH) and 277 to 352 (QYPQ…SSKS). Over residues 71-80 (HTSSNTSNNK) the composition is skewed to low complexity. Composition is skewed to polar residues over residues 93-104 (NFGNESSHQNGG) and 205-225 (TEPNYHVNPQVNTPPQHSVNV). Residues 289–309 (GGVYPMVAPQYQQQPQQHPQQ) are compositionally biased toward low complexity.

This sequence belongs to the EDC family.

It localises to the cytoplasm. Its function is as follows. mRNA-binding protein which stimulates mRNA decapping. The polypeptide is Enhancer of mRNA-decapping protein 1 (EDC1) (Debaryomyces hansenii (strain ATCC 36239 / CBS 767 / BCRC 21394 / JCM 1990 / NBRC 0083 / IGC 2968) (Yeast)).